The following is a 208-amino-acid chain: Ribosomal RNA large subunit methyltransferase E (208 aa).

Residues G62, W64, D82, D98, and D123 each coordinate S-adenosyl-L-methionine. Catalysis depends on K163, which acts as the Proton acceptor.

Belongs to the class I-like SAM-binding methyltransferase superfamily. RNA methyltransferase RlmE family.

Its subcellular location is the cytoplasm. The catalysed reaction is uridine(2552) in 23S rRNA + S-adenosyl-L-methionine = 2'-O-methyluridine(2552) in 23S rRNA + S-adenosyl-L-homocysteine + H(+). In terms of biological role, specifically methylates the uridine in position 2552 of 23S rRNA at the 2'-O position of the ribose in the fully assembled 50S ribosomal subunit. This chain is Ribosomal RNA large subunit methyltransferase E, found in Edwardsiella ictaluri (strain 93-146).